Consider the following 98-residue polypeptide: NADH-ubiquinone oxidoreductase chain 4L (98 aa).

A run of 3 helical transmembrane segments spans residues 1-21 (MTPVHFSFSSAFILGLMGLAF), 29-49 (ALLCLEGMMLSLFIALALWAL), and 59-79 (APMLLLAFSACEASTGLALLV).

Belongs to the complex I subunit 4L family.

It localises to the mitochondrion membrane. It carries out the reaction a ubiquinone + NADH + 5 H(+)(in) = a ubiquinol + NAD(+) + 4 H(+)(out). Functionally, core subunit of the mitochondrial membrane respiratory chain NADH dehydrogenase (Complex I) which catalyzes electron transfer from NADH through the respiratory chain, using ubiquinone as an electron acceptor. Part of the enzyme membrane arm which is embedded in the lipid bilayer and involved in proton translocation. The protein is NADH-ubiquinone oxidoreductase chain 4L (MT-ND4L) of Carassius auratus (Goldfish).